The chain runs to 303 residues: Oxygen-dependent coproporphyrinogen-III oxidase (303 aa).

Serine 93 serves as a coordination point for substrate. 2 residues coordinate a divalent metal cation: histidine 97 and histidine 107. The active-site Proton donor is histidine 107. A substrate-binding site is contributed by 109–111 (NIR). Histidine 146 and histidine 176 together coordinate a divalent metal cation. The segment at 241-276 (YVEFNLLLDRGTLFGIQSNGRIESILSSMPPLVKWE) is important for dimerization.

The protein belongs to the aerobic coproporphyrinogen-III oxidase family. Homodimer. Requires a divalent metal cation as cofactor.

The protein localises to the cytoplasm. The enzyme catalyses coproporphyrinogen III + O2 + 2 H(+) = protoporphyrinogen IX + 2 CO2 + 2 H2O. It functions in the pathway porphyrin-containing compound metabolism; protoporphyrin-IX biosynthesis; protoporphyrinogen-IX from coproporphyrinogen-III (O2 route): step 1/1. Its function is as follows. Involved in the heme biosynthesis. Catalyzes the aerobic oxidative decarboxylation of propionate groups of rings A and B of coproporphyrinogen-III to yield the vinyl groups in protoporphyrinogen-IX. The protein is Oxygen-dependent coproporphyrinogen-III oxidase of Wigglesworthia glossinidia brevipalpis.